The sequence spans 170 residues: Translationally-controlled tumor protein homolog (170 aa).

Residues 1–170 enclose the TCTP domain; the sequence is MLIYNDILNG…WKHGLKETKV (170 aa).

It belongs to the TCTP family.

The protein resides in the cytoplasm. It is found in the cytoskeleton. Its function is as follows. Involved in protein synthesis. Involved in microtubule stabilization. The protein is Translationally-controlled tumor protein homolog of Gibberella zeae (strain ATCC MYA-4620 / CBS 123657 / FGSC 9075 / NRRL 31084 / PH-1) (Wheat head blight fungus).